Here is a 484-residue protein sequence, read N- to C-terminus: Cholesterol 22-hydroxylase CYP90B27 (484 aa).

A helical membrane pass occupies residues Ala2 to Phe22. Residue Cys429 participates in heme binding.

It belongs to the cytochrome P450 family. Expressed in roots.

Its subcellular location is the membrane. It catalyses the reaction cholesterol + reduced [NADPH--hemoprotein reductase] + O2 = (22R)-hydroxycholesterol + oxidized [NADPH--hemoprotein reductase] + H2O + H(+). The protein operates within steroid metabolism; cholesterol metabolism. In terms of biological role, involved in the biosynthesis of steroidal saponins and alkaloids natural products from cholesterol such as spirostane-type saponins and polyphyllins, compounds with pharmacological activity. Catalyzes the C-22 hydroxylation of cholesterol to form 22R-hydroxycholesterol. The chain is Cholesterol 22-hydroxylase CYP90B27 from Paris polyphylla (Daiswa polyphylla).